The sequence spans 151 residues: 3-hydroxyacyl-[acyl-carrier-protein] dehydratase FabZ (151 aa).

Histidine 54 is a catalytic residue.

The protein belongs to the thioester dehydratase family. FabZ subfamily. As to quaternary structure, oligomer. The N-terminus is blocked.

Its subcellular location is the cytoplasm. The catalysed reaction is a (3R)-hydroxyacyl-[ACP] = a (2E)-enoyl-[ACP] + H2O. Functionally, involved in unsaturated fatty acids biosynthesis. Catalyzes the dehydration of short chain beta-hydroxyacyl-ACPs and long chain saturated and unsaturated beta-hydroxyacyl-ACPs. This Escherichia coli O9:H4 (strain HS) protein is 3-hydroxyacyl-[acyl-carrier-protein] dehydratase FabZ.